The chain runs to 283 residues: Phospholipase C (283 aa).

Residues 1 to 24 (MKKKVLALAAAITVVAPLQSVAFA) form the signal peptide. Positions 25–38 (HENDGGSKIKIVHR) are excised as a propeptide. Positions 39, 52, 93, 107, 156, 160, 166, 180, and 184 each coordinate Zn(2+). Residues 39–283 (WSAEDKHKEG…QLWFDTYGDR (245 aa)) enclose the Zn-dependent PLC domain.

This sequence belongs to the bacterial zinc-metallophospholipase C family. As to quaternary structure, monomer. The cofactor is Zn(2+).

The catalysed reaction is a 1,2-diacyl-sn-glycero-3-phosphocholine + H2O = phosphocholine + a 1,2-diacyl-sn-glycerol + H(+). Functionally, required, with sphingomyelinase, to effect target cell lysis (hemolysis). The chain is Phospholipase C (plc) from Bacillus cereus.